Reading from the N-terminus, the 348-residue chain is Holliday junction branch migration complex subunit RuvB (348 aa).

The tract at residues 4–198 (TTDYGASNTG…FGFTAHLDFY (195 aa)) is large ATPase domain (RuvB-L). ATP is bound by residues L37, R38, G79, K82, T83, T84, 145-147 (EDF), R188, Y198, and R235. Position 83 (T83) interacts with Mg(2+). Positions 199–269 (PHEELEKLIE…DVKEALALYQ (71 aa)) are small ATPAse domain (RuvB-S). Positions 272 to 348 (SEGLDRLDIA…DIIFGNYAQR (77 aa)) are head domain (RuvB-H). The DNA site is built by R327 and R332.

Belongs to the RuvB family. As to quaternary structure, homohexamer. Forms an RuvA(8)-RuvB(12)-Holliday junction (HJ) complex. HJ DNA is sandwiched between 2 RuvA tetramers; dsDNA enters through RuvA and exits via RuvB. An RuvB hexamer assembles on each DNA strand where it exits the tetramer. Each RuvB hexamer is contacted by two RuvA subunits (via domain III) on 2 adjacent RuvB subunits; this complex drives branch migration. In the full resolvosome a probable DNA-RuvA(4)-RuvB(12)-RuvC(2) complex forms which resolves the HJ.

The protein localises to the cytoplasm. It carries out the reaction ATP + H2O = ADP + phosphate + H(+). In terms of biological role, the RuvA-RuvB-RuvC complex processes Holliday junction (HJ) DNA during genetic recombination and DNA repair, while the RuvA-RuvB complex plays an important role in the rescue of blocked DNA replication forks via replication fork reversal (RFR). RuvA specifically binds to HJ cruciform DNA, conferring on it an open structure. The RuvB hexamer acts as an ATP-dependent pump, pulling dsDNA into and through the RuvAB complex. RuvB forms 2 homohexamers on either side of HJ DNA bound by 1 or 2 RuvA tetramers; 4 subunits per hexamer contact DNA at a time. Coordinated motions by a converter formed by DNA-disengaged RuvB subunits stimulates ATP hydrolysis and nucleotide exchange. Immobilization of the converter enables RuvB to convert the ATP-contained energy into a lever motion, pulling 2 nucleotides of DNA out of the RuvA tetramer per ATP hydrolyzed, thus driving DNA branch migration. The RuvB motors rotate together with the DNA substrate, which together with the progressing nucleotide cycle form the mechanistic basis for DNA recombination by continuous HJ branch migration. Branch migration allows RuvC to scan DNA until it finds its consensus sequence, where it cleaves and resolves cruciform DNA. The chain is Holliday junction branch migration complex subunit RuvB from Bifidobacterium longum (strain DJO10A).